Here is a 258-residue protein sequence, read N- to C-terminus: Ribonuclease HII (258 aa).

Residues 71–258 enclose the RNase H type-2 domain; that stretch reads QLIAGIDEVG…PIKTMVNFKS (188 aa). A divalent metal cation is bound by residues Asp77, Glu78, and Asp169.

Belongs to the RNase HII family. Requires Mn(2+) as cofactor. It depends on Mg(2+) as a cofactor.

It is found in the cytoplasm. It catalyses the reaction Endonucleolytic cleavage to 5'-phosphomonoester.. Its function is as follows. Endonuclease that specifically degrades the RNA of RNA-DNA hybrids. This chain is Ribonuclease HII (rnhB), found in Lactococcus lactis subsp. lactis (strain IL1403) (Streptococcus lactis).